The sequence spans 264 residues: Methionine aminopeptidase (264 aa).

Position 79 (H79) interacts with substrate. Residues D97, D108, and H171 each contribute to the a divalent metal cation site. H178 contacts substrate. The a divalent metal cation site is built by E204 and E235.

It belongs to the peptidase M24A family. Methionine aminopeptidase type 1 subfamily. In terms of assembly, monomer. Requires Co(2+) as cofactor. It depends on Zn(2+) as a cofactor. Mn(2+) is required as a cofactor. Fe(2+) serves as cofactor.

It carries out the reaction Release of N-terminal amino acids, preferentially methionine, from peptides and arylamides.. Its function is as follows. Removes the N-terminal methionine from nascent proteins. The N-terminal methionine is often cleaved when the second residue in the primary sequence is small and uncharged (Met-Ala-, Cys, Gly, Pro, Ser, Thr, or Val). Requires deformylation of the N(alpha)-formylated initiator methionine before it can be hydrolyzed. The chain is Methionine aminopeptidase from Salmonella typhi.